The sequence spans 342 residues: DNA-directed RNA polymerase subunit alpha (342 aa).

The tract at residues 1 to 239 is alpha N-terminal domain (alpha-NTD); sequence MTTFLAKNWS…DQLQVFINFQ (239 aa). An alpha C-terminal domain (alpha-CTD) region spans residues 254-342; it reads INPVLLKKVY…SLAKKHEDQY (89 aa).

The protein belongs to the RNA polymerase alpha chain family. As to quaternary structure, homodimer. The RNAP catalytic core consists of 2 alpha, 1 beta, 1 beta' and 1 omega subunit. When a sigma factor is associated with the core the holoenzyme is formed, which can initiate transcription.

It carries out the reaction RNA(n) + a ribonucleoside 5'-triphosphate = RNA(n+1) + diphosphate. Functionally, DNA-dependent RNA polymerase catalyzes the transcription of DNA into RNA using the four ribonucleoside triphosphates as substrates. In Orientia tsutsugamushi (strain Boryong) (Rickettsia tsutsugamushi), this protein is DNA-directed RNA polymerase subunit alpha.